The primary structure comprises 370 residues: 4-hydroxy-3-methylbut-2-en-1-yl diphosphate synthase (flavodoxin) (370 aa).

Residues Cys-270, Cys-273, Cys-305, and Glu-312 each contribute to the [4Fe-4S] cluster site.

The protein belongs to the IspG family. [4Fe-4S] cluster is required as a cofactor.

The enzyme catalyses (2E)-4-hydroxy-3-methylbut-2-enyl diphosphate + oxidized [flavodoxin] + H2O + 2 H(+) = 2-C-methyl-D-erythritol 2,4-cyclic diphosphate + reduced [flavodoxin]. It functions in the pathway isoprenoid biosynthesis; isopentenyl diphosphate biosynthesis via DXP pathway; isopentenyl diphosphate from 1-deoxy-D-xylulose 5-phosphate: step 5/6. Its function is as follows. Converts 2C-methyl-D-erythritol 2,4-cyclodiphosphate (ME-2,4cPP) into 1-hydroxy-2-methyl-2-(E)-butenyl 4-diphosphate. The sequence is that of 4-hydroxy-3-methylbut-2-en-1-yl diphosphate synthase (flavodoxin) from Azotobacter vinelandii (strain DJ / ATCC BAA-1303).